The primary structure comprises 70 residues: ATP synthase subunit c (70 aa).

A run of 2 helical transmembrane segments spans residues 4–24 (IAAG…DGIV) and 47–67 (FIGV…SLLV).

Belongs to the ATPase C chain family. F-type ATPases have 2 components, F(1) - the catalytic core - and F(0) - the membrane proton channel. F(1) has five subunits: alpha(3), beta(3), gamma(1), delta(1), epsilon(1). F(0) has three main subunits: a(1), b(2) and c(10-14). The alpha and beta chains form an alternating ring which encloses part of the gamma chain. F(1) is attached to F(0) by a central stalk formed by the gamma and epsilon chains, while a peripheral stalk is formed by the delta and b chains.

The protein localises to the cell membrane. F(1)F(0) ATP synthase produces ATP from ADP in the presence of a proton or sodium gradient. F-type ATPases consist of two structural domains, F(1) containing the extramembraneous catalytic core and F(0) containing the membrane proton channel, linked together by a central stalk and a peripheral stalk. During catalysis, ATP synthesis in the catalytic domain of F(1) is coupled via a rotary mechanism of the central stalk subunits to proton translocation. In terms of biological role, key component of the F(0) channel; it plays a direct role in translocation across the membrane. A homomeric c-ring of between 10-14 subunits forms the central stalk rotor element with the F(1) delta and epsilon subunits. This Pediococcus pentosaceus (strain ATCC 25745 / CCUG 21536 / LMG 10740 / 183-1w) protein is ATP synthase subunit c.